The chain runs to 86 residues: MKVSVVITLAVLGVMFVWASAAELEERGSDQRDSPAWLKSMERIFQSEERECRKMFGGCSVDSDCCAHLGCKPTLKYCAWDGTFGK.

Residues 1 to 21 (MKVSVVITLAVLGVMFVWASA) form the signal peptide. A propeptide spanning residues 22–50 (AELEERGSDQRDSPAWLKSMERIFQSEER) is cleaved from the precursor. 3 disulfide bridges follow: cysteine 52–cysteine 66, cysteine 59–cysteine 71, and cysteine 65–cysteine 78. Phenylalanine 84 is modified (phenylalanine amide).

Belongs to the neurotoxin 10 (Hwtx-1) family. 28 (Jztx-11) subfamily. Expressed by the venom gland.

The protein localises to the secreted. This toxin acts as a voltage-dependent gating-modifier. It inhibits the sodium conductance (IC(50)=124 nM) and slows the fast inactivation (EC(50)=1180 nM) of Nav1.5/SCN5A. It significantly shifts the activation to more depolarized voltages and decreases the deactivation of Nav1.5 currents upon extreme depolarization, but only slightly affects voltage-dependence of steady-state inactivation. In addition, this toxin causes an approximately five-fold decrease in the rate of recovery from inactivation and an approximately 1.9-fold reduction in the closed-state inactivation rate. This toxin integrates the functions of site 3 toxins (alpha-scorpion toxins) with site 4 toxins (beta-scorpion and spider toxins) by targeting multiple sites on Nav1.5. Also shows inhibition of voltage-gated potassium channels (5 uM completely inhibits Kv2.1/KCNB1, whereas 5 uM moderately inhibits Kv4.2/KCND2 Kv4.1/KCND1 channels). This chain is Kappa-theraphotoxin-Cg1a 2, found in Chilobrachys guangxiensis (Chinese earth tiger tarantula).